The following is a 168-amino-acid chain: Crossover junction endodeoxyribonuclease RuvC (168 aa).

Residues aspartate 7, glutamate 67, and histidine 139 contribute to the active site. Positions 7, 67, and 139 each coordinate Mg(2+).

It belongs to the RuvC family. Homodimer which binds Holliday junction (HJ) DNA. The HJ becomes 2-fold symmetrical on binding to RuvC with unstacked arms; it has a different conformation from HJ DNA in complex with RuvA. In the full resolvosome a probable DNA-RuvA(4)-RuvB(12)-RuvC(2) complex forms which resolves the HJ. Mg(2+) serves as cofactor.

It localises to the cytoplasm. The enzyme catalyses Endonucleolytic cleavage at a junction such as a reciprocal single-stranded crossover between two homologous DNA duplexes (Holliday junction).. The RuvA-RuvB-RuvC complex processes Holliday junction (HJ) DNA during genetic recombination and DNA repair. Endonuclease that resolves HJ intermediates. Cleaves cruciform DNA by making single-stranded nicks across the HJ at symmetrical positions within the homologous arms, yielding a 5'-phosphate and a 3'-hydroxyl group; requires a central core of homology in the junction. The consensus cleavage sequence is 5'-(A/T)TT(C/G)-3'. Cleavage occurs on the 3'-side of the TT dinucleotide at the point of strand exchange. HJ branch migration catalyzed by RuvA-RuvB allows RuvC to scan DNA until it finds its consensus sequence, where it cleaves and resolves the cruciform DNA. In Deinococcus geothermalis (strain DSM 11300 / CIP 105573 / AG-3a), this protein is Crossover junction endodeoxyribonuclease RuvC.